The following is a 470-amino-acid chain: ATP synthase subunit beta (470 aa).

158–165 (GGAGVGKT) is a binding site for ATP.

The protein belongs to the ATPase alpha/beta chains family. In terms of assembly, F-type ATPases have 2 components, CF(1) - the catalytic core - and CF(0) - the membrane proton channel. CF(1) has five subunits: alpha(3), beta(3), gamma(1), delta(1), epsilon(1). CF(0) has three main subunits: a(1), b(2) and c(9-12). The alpha and beta chains form an alternating ring which encloses part of the gamma chain. CF(1) is attached to CF(0) by a central stalk formed by the gamma and epsilon chains, while a peripheral stalk is formed by the delta and b chains.

The protein localises to the cell membrane. It carries out the reaction ATP + H2O + 4 H(+)(in) = ADP + phosphate + 5 H(+)(out). In terms of biological role, produces ATP from ADP in the presence of a proton gradient across the membrane. The catalytic sites are hosted primarily by the beta subunits. The polypeptide is ATP synthase subunit beta (Halalkalibacterium halodurans (strain ATCC BAA-125 / DSM 18197 / FERM 7344 / JCM 9153 / C-125) (Bacillus halodurans)).